The sequence spans 72 residues: Cytotoxin 9 (72 aa).

The signal sequence occupies residues 1–12 (VVTIVCLDLGYT). 4 disulfide bridges follow: Cys-15/Cys-33, Cys-26/Cys-50, Cys-54/Cys-65, and Cys-66/Cys-71.

It belongs to the three-finger toxin family. Short-chain subfamily. Type IA cytotoxin sub-subfamily. Monomer in solution; Homodimer and oligomer in the presence of negatively charged lipids forming a pore with a size ranging between 20 and 30 Angstroms. Expressed by the venom gland.

It localises to the secreted. Shows cytolytic activity on many different cells by forming a pore in lipid membranes. In vivo, increases heart rate or kills the animal by cardiac arrest. In addition, it binds to heparin with high affinity, interacts with Kv channel-interacting protein 1 (KCNIP1) in a calcium-independent manner, and binds to integrin alpha-V/beta-3 (ITGAV/ITGB3) with moderate affinity. Preferentially binds acidic phospholipids like phosphatidylserine, phosphatidic acid and phosphatidyl glycerol. Has hemolytic activity towards human erythrocytes (EC(50)=0.171 uM) and cytolytic activity towards various cell lines. The sequence is that of Cytotoxin 9 from Naja naja (Indian cobra).